The sequence spans 89 residues: MALDTATKRSILAEYATTEGDTGSPEVQVALLTRRITDLTEHLKVHRHDHHSRRGLLLLVGRRRRLLRYLAKKDIARYRSLIERLGLRR.

Belongs to the universal ribosomal protein uS15 family. As to quaternary structure, part of the 30S ribosomal subunit. Forms a bridge to the 50S subunit in the 70S ribosome, contacting the 23S rRNA.

One of the primary rRNA binding proteins, it binds directly to 16S rRNA where it helps nucleate assembly of the platform of the 30S subunit by binding and bridging several RNA helices of the 16S rRNA. Its function is as follows. Forms an intersubunit bridge (bridge B4) with the 23S rRNA of the 50S subunit in the ribosome. This is Small ribosomal subunit protein uS15 from Acidothermus cellulolyticus (strain ATCC 43068 / DSM 8971 / 11B).